We begin with the raw amino-acid sequence, 869 residues long: DNA mismatch repair protein MutS (869 aa).

An ATP-binding site is contributed by 602–609; that stretch reads GPNMSGKS.

The protein belongs to the DNA mismatch repair MutS family.

In terms of biological role, this protein is involved in the repair of mismatches in DNA. It is possible that it carries out the mismatch recognition step. This protein has a weak ATPase activity. This is DNA mismatch repair protein MutS from Bacillus licheniformis (strain ATCC 14580 / DSM 13 / JCM 2505 / CCUG 7422 / NBRC 12200 / NCIMB 9375 / NCTC 10341 / NRRL NRS-1264 / Gibson 46).